The sequence spans 530 residues: Light-independent protochlorophyllide reductase subunit B (530 aa).

Residue Asp36 participates in [4Fe-4S] cluster binding. Asp287 functions as the Proton donor in the catalytic mechanism. 422 to 423 (GL) provides a ligand contact to substrate. Residues 453-472 (PAVQTASSEPQPSAIETPSA) are disordered. Over residues 454–463 (AVQTASSEPQ) the composition is skewed to polar residues.

It belongs to the ChlB/BchB/BchZ family. Protochlorophyllide reductase is composed of three subunits; BchL, BchN and BchB. Forms a heterotetramer of two BchB and two BchN subunits. The cofactor is [4Fe-4S] cluster.

The catalysed reaction is chlorophyllide a + oxidized 2[4Fe-4S]-[ferredoxin] + 2 ADP + 2 phosphate = protochlorophyllide a + reduced 2[4Fe-4S]-[ferredoxin] + 2 ATP + 2 H2O. It functions in the pathway porphyrin-containing compound metabolism; bacteriochlorophyll biosynthesis (light-independent). Functionally, component of the dark-operative protochlorophyllide reductase (DPOR) that uses Mg-ATP and reduced ferredoxin to reduce ring D of protochlorophyllide (Pchlide) to form chlorophyllide a (Chlide). This reaction is light-independent. The NB-protein (BchN-BchB) is the catalytic component of the complex. The protein is Light-independent protochlorophyllide reductase subunit B of Rhodopseudomonas palustris (strain BisB18).